We begin with the raw amino-acid sequence, 204 residues long: Large ribosomal subunit protein eL15 (204 aa).

Belongs to the eukaryotic ribosomal protein eL15 family.

The sequence is that of Large ribosomal subunit protein eL15 (RpL15) from Chironomus tentans (Midge).